We begin with the raw amino-acid sequence, 727 residues long: 5'-AMP-activated serine/threonine-protein kinase catalytic subunit alpha (727 aa).

Residues 31–284 (YRLDKTLGIG…IHEIRNHPWF (254 aa)) form the Protein kinase domain. ATP contacts are provided by residues 37–45 (LGIGSFGKV) and K60. Residue D154 is the Proton acceptor of the active site. Residue T188 is modified to Phosphothreonine. The segment at 382–590 (FTTTTGFNPS…GSNNNSYEGG (209 aa)) is disordered. 2 stretches are compositionally biased toward low complexity: residues 391 to 483 (SNSN…SSIS) and 494 to 586 (NLNN…NNNS). The KA1 domain occupies 679–727 (RMVNGKPIKLVLQLFRVAENRYLLDIKKIEGEIFIFFDICSLMLEELNL).

The protein belongs to the protein kinase superfamily. CAMK Ser/Thr protein kinase family. SNF1 subfamily. Heterotrimer of an alpha catalytic subunit, a beta and a gamma non-catalytic subunits.

It catalyses the reaction L-seryl-[protein] + ATP = O-phospho-L-seryl-[protein] + ADP + H(+). The enzyme catalyses L-threonyl-[protein] + ATP = O-phospho-L-threonyl-[protein] + ADP + H(+). Activated enzyme phosphorylates target proteins and initiates downstream signaling pathways that shift metabolism from anabolic to catabolic pathways. Acts as a highly sensitive cellular energy sensor. This is 5'-AMP-activated serine/threonine-protein kinase catalytic subunit alpha (snfA) from Dictyostelium discoideum (Social amoeba).